The following is a 258-amino-acid chain: Regulatory protein RecX (258 aa).

This sequence belongs to the RecX family.

The protein resides in the cytoplasm. Its function is as follows. Modulates RecA activity. The chain is Regulatory protein RecX from Streptococcus pneumoniae (strain JJA).